The chain runs to 711 residues: DNA ligase (711 aa).

The interval Met-1 to Pro-21 is disordered. Low complexity predominate over residues Ala-10 to Pro-21. Residues Asp-52 to Asp-56, Ser-101 to Leu-102, and Glu-146 each bind NAD(+). Lys-148 functions as the N6-AMP-lysine intermediate in the catalytic mechanism. The NAD(+) site is built by Arg-169, Glu-205, Lys-322, and Lys-346. Positions 440, 443, 458, and 464 each coordinate Zn(2+). Residues Arg-623–Ser-711 form the BRCT domain.

Belongs to the NAD-dependent DNA ligase family. LigA subfamily. Mg(2+) serves as cofactor. Requires Mn(2+) as cofactor.

It carries out the reaction NAD(+) + (deoxyribonucleotide)n-3'-hydroxyl + 5'-phospho-(deoxyribonucleotide)m = (deoxyribonucleotide)n+m + AMP + beta-nicotinamide D-nucleotide.. Its function is as follows. DNA ligase that catalyzes the formation of phosphodiester linkages between 5'-phosphoryl and 3'-hydroxyl groups in double-stranded DNA using NAD as a coenzyme and as the energy source for the reaction. It is essential for DNA replication and repair of damaged DNA. The sequence is that of DNA ligase from Cupriavidus pinatubonensis (strain JMP 134 / LMG 1197) (Cupriavidus necator (strain JMP 134)).